A 465-amino-acid chain; its full sequence is Mothers against decapentaplegic homolog 5 (465 aa).

Threonine 2 is subject to N-acetylthreonine. The region spanning 13 to 137 (PAVKRLLGWK…YKRVESPVLP (125 aa)) is the MH1 domain. 4 residues coordinate Zn(2+): cysteine 65, cysteine 110, cysteine 122, and histidine 127. The disordered stretch occupies residues 163-249 (NEPHMPQNAT…PMDTSNNMIP (87 aa)). The span at 169-182 (QNATFPDSFHQPNN) shows a compositional bias: polar residues. The segment covering 186–197 (PLSPNSPYPPSP) has biased composition (pro residues). Positions 198 to 214 (ASSTYPNSPASSGPGSP) are enriched in low complexity. Residues 234 to 249 (GQDNSQPMDTSNNMIP) are compositionally biased toward polar residues. Residues 271 to 465 (WCSIVYYELN…SPLNPISSVS (195 aa)) form the MH2 domain. Residues serine 463 and serine 465 each carry the phosphoserine modification.

It belongs to the dwarfin/SMAD family. Homodimer. Forms trimers with the co-SMAD SMAD4. Interacts with PEBP2-alpha subunit and SMURF1. Interacts with SUV39H1 and SUV39H2. Interacts (via MH2 domain) with LEMD3. Interacts with WWP1. Interacts with TMEM119. Interacts with ZNF8. Interacts with RANBP3L. Interacts with HK1. Interacts with HGS; this interaction attenuates BMP signaling. In terms of processing, phosphorylated on serine by BMP (bone morphogenetic proteins) type 1 receptor kinase. Ubiquitin-mediated proteolysis by SMAD-specific E3 ubiquitin ligase SMURF1. As to expression, ubiquitous.

Its subcellular location is the cytoplasm. It localises to the nucleus. The protein resides in the mitochondrion. Transcriptional regulator that plays a role in various cellular processes including embryonic development, cell differentiation, angiogenesis and tissue homeostasis. Upon BMP ligand binding to their receptors at the cell surface, is phosphorylated by activated type I BMP receptors (BMPRIs) and associates with SMAD4 to form a heteromeric complex which translocates into the nucleus acting as transcription factor. In turn, the hetero-trimeric complex recognizes cis-regulatory elements containing Smad Binding Elements (SBEs) to modulate the outcome of the signaling network. Non-phosphorylated SMAD5 has a cytoplasmic role in energy metabolism regulation by promoting mitochondrial respiration and glycolysis in response to cytoplasmic pH changes. Mechanistically, interacts with hexokinase 1/HK1 and thereby accelerates glycolysis. The polypeptide is Mothers against decapentaplegic homolog 5 (SMAD5) (Homo sapiens (Human)).